Consider the following 465-residue polypeptide: Glutamate--tRNA ligase (465 aa).

The 'HIGH' region signature appears at 8–18 (PSPTGHLHIGG). Positions 97, 99, 124, and 126 each coordinate Zn(2+). The short motif at 234–238 (RLSKR) is the 'KMSKS' region element. Lys237 contacts ATP.

The protein belongs to the class-I aminoacyl-tRNA synthetase family. Glutamate--tRNA ligase type 1 subfamily. Monomer. Zn(2+) serves as cofactor.

It localises to the cytoplasm. The catalysed reaction is tRNA(Glu) + L-glutamate + ATP = L-glutamyl-tRNA(Glu) + AMP + diphosphate. Its function is as follows. Catalyzes the attachment of glutamate to tRNA(Glu) in a two-step reaction: glutamate is first activated by ATP to form Glu-AMP and then transferred to the acceptor end of tRNA(Glu). This Thermodesulfovibrio yellowstonii (strain ATCC 51303 / DSM 11347 / YP87) protein is Glutamate--tRNA ligase.